The primary structure comprises 465 residues: ATP synthase subunit beta (465 aa).

152–159 serves as a coordination point for ATP; the sequence is GGAGVGKT.

Belongs to the ATPase alpha/beta chains family. In terms of assembly, F-type ATPases have 2 components, CF(1) - the catalytic core - and CF(0) - the membrane proton channel. CF(1) has five subunits: alpha(3), beta(3), gamma(1), delta(1), epsilon(1). CF(0) has three main subunits: a(1), b(2) and c(9-12). The alpha and beta chains form an alternating ring which encloses part of the gamma chain. CF(1) is attached to CF(0) by a central stalk formed by the gamma and epsilon chains, while a peripheral stalk is formed by the delta and b chains.

The protein localises to the cell inner membrane. The catalysed reaction is ATP + H2O + 4 H(+)(in) = ADP + phosphate + 5 H(+)(out). Produces ATP from ADP in the presence of a proton gradient across the membrane. The catalytic sites are hosted primarily by the beta subunits. This is ATP synthase subunit beta from Campylobacter curvus (strain 525.92).